The sequence spans 308 residues: MDCVENARLQSKVLIESLPYLRQFHGETVVIKYGGHAMKDEALKKAFALNVALLKLVGINPVIVHGGGPQIGKMLEQLNIQSHFREGLRVTDDATMDVVEMVLVGKVNKEIVNQMNLAGAKAVGLSGKDGMLIRARKMEMVISKEAQAPEIIDLGKVGEVMGVNTTLLRSLERDGFVPVIAPVGVDDNGETYNINADAVAGAVAAALKAKRLLLLTDVAGILDHDKKLIRSVNMREAVNLFSDGTLTGGMIPKVKCCLEALEEGVEKAMIIDGRTENCILLELLTDKGVGTEIVSDRAAQAACNCVLR.

Residues 67 to 68 (GG), Arg89, and Asn193 each bind substrate.

Belongs to the acetylglutamate kinase family. ArgB subfamily.

The protein localises to the cytoplasm. The enzyme catalyses N-acetyl-L-glutamate + ATP = N-acetyl-L-glutamyl 5-phosphate + ADP. Its pathway is amino-acid biosynthesis; L-arginine biosynthesis; N(2)-acetyl-L-ornithine from L-glutamate: step 2/4. Functionally, catalyzes the ATP-dependent phosphorylation of N-acetyl-L-glutamate. This is Acetylglutamate kinase from Nitratidesulfovibrio vulgaris (strain DP4) (Desulfovibrio vulgaris).